A 273-amino-acid chain; its full sequence is Type III pantothenate kinase (273 aa).

ATP is bound at residue 5 to 12 (DVGNSHVV). 112-115 (GTDL) serves as a coordination point for substrate. Catalysis depends on Asp-114, which acts as the Proton acceptor. Asp-134 contributes to the K(+) binding site. Thr-137 contacts ATP. Thr-189 serves as a coordination point for substrate.

This sequence belongs to the type III pantothenate kinase family. In terms of assembly, homodimer. The cofactor is NH4(+). Requires K(+) as cofactor.

It localises to the cytoplasm. The enzyme catalyses (R)-pantothenate + ATP = (R)-4'-phosphopantothenate + ADP + H(+). It functions in the pathway cofactor biosynthesis; coenzyme A biosynthesis; CoA from (R)-pantothenate: step 1/5. Its function is as follows. Catalyzes the phosphorylation of pantothenate (Pan), the first step in CoA biosynthesis. This is Type III pantothenate kinase from Treponema pallidum subsp. pallidum (strain SS14).